Reading from the N-terminus, the 121-residue chain is Cell division protein FtsB (121 aa).

The Cytoplasmic portion of the chain corresponds to 1–6 (MRNWRW). Residues 7–24 (LLLVLAVLLAWLQYRFWF) form a helical membrane-spanning segment. Residues 25–121 (GPGNSGEVMM…PASTDPVDHP (97 aa)) lie on the Periplasmic side of the membrane. Residues 31 to 66 (EVMMLEAQVAHQTQDNEGLRQRNQALAAEVKDLKDG) are a coiled coil. A disordered region spans residues 94-121 (APLPAPASPETAAPAQQAPASTDPVDHP). The span at 101-121 (SPETAAPAQQAPASTDPVDHP) shows a compositional bias: low complexity.

Belongs to the FtsB family. As to quaternary structure, part of a complex composed of FtsB, FtsL and FtsQ.

It is found in the cell inner membrane. Functionally, essential cell division protein. May link together the upstream cell division proteins, which are predominantly cytoplasmic, with the downstream cell division proteins, which are predominantly periplasmic. This chain is Cell division protein FtsB, found in Xanthomonas oryzae pv. oryzae (strain MAFF 311018).